The following is a 214-amino-acid chain: C-type lectin domain family 2 member L (214 aa).

The interval 1-56 (MEPAREPPSRARPPPPLAARPAPAPAAPRPRSPAEAEARGPEGLLRRSGSGYEGST) is disordered. Positions 10 to 31 (RARPPPPLAARPAPAPAAPRPR) are enriched in pro residues. Ser32 carries the post-translational modification Phosphoserine. The chain crosses the membrane as a helical span at residues 69–89 (LLLGAIAVLLFAILVVMSILA). One can recognise a C-type lectin domain in the interval 107 to 209 (YGRKCYFFSE…CLMTRPWVCS (103 aa)). Disulfide bonds link Cys128/Cys208 and Cys187/Cys200.

The protein resides in the membrane. In Homo sapiens (Human), this protein is C-type lectin domain family 2 member L (CLEC2L).